The following is a 448-amino-acid chain: 3-phosphoshikimate 1-carboxyvinyltransferase (448 aa).

The 3-phosphoshikimate site is built by K38, S39, and R43. K38 is a phosphoenolpyruvate binding site. Phosphoenolpyruvate-binding residues include G111 and R140. The 3-phosphoshikimate site is built by S185, Q187, D335, and K362. Position 187 (Q187) interacts with phosphoenolpyruvate. D335 functions as the Proton acceptor in the catalytic mechanism. Phosphoenolpyruvate contacts are provided by R366 and R408.

Belongs to the EPSP synthase family. In terms of assembly, monomer.

It localises to the cytoplasm. It carries out the reaction 3-phosphoshikimate + phosphoenolpyruvate = 5-O-(1-carboxyvinyl)-3-phosphoshikimate + phosphate. Its pathway is metabolic intermediate biosynthesis; chorismate biosynthesis; chorismate from D-erythrose 4-phosphate and phosphoenolpyruvate: step 6/7. Functionally, catalyzes the transfer of the enolpyruvyl moiety of phosphoenolpyruvate (PEP) to the 5-hydroxyl of shikimate-3-phosphate (S3P) to produce enolpyruvyl shikimate-3-phosphate and inorganic phosphate. The sequence is that of 3-phosphoshikimate 1-carboxyvinyltransferase from Gloeothece citriformis (strain PCC 7424) (Cyanothece sp. (strain PCC 7424)).